The following is a 163-amino-acid chain: NADH-quinone oxidoreductase subunit I (163 aa).

4Fe-4S ferredoxin-type domains lie at 53 to 83 (LRRY…IEAG) and 94 to 123 (TLYE…ETRE). 8 residues coordinate [4Fe-4S] cluster: cysteine 63, cysteine 66, cysteine 69, cysteine 73, cysteine 103, cysteine 106, cysteine 109, and cysteine 113.

The protein belongs to the complex I 23 kDa subunit family. In terms of assembly, NDH-1 is composed of 14 different subunits. Subunits NuoA, H, J, K, L, M, N constitute the membrane sector of the complex. The cofactor is [4Fe-4S] cluster.

Its subcellular location is the cell inner membrane. It catalyses the reaction a quinone + NADH + 5 H(+)(in) = a quinol + NAD(+) + 4 H(+)(out). NDH-1 shuttles electrons from NADH, via FMN and iron-sulfur (Fe-S) centers, to quinones in the respiratory chain. The immediate electron acceptor for the enzyme in this species is believed to be ubiquinone. Couples the redox reaction to proton translocation (for every two electrons transferred, four hydrogen ions are translocated across the cytoplasmic membrane), and thus conserves the redox energy in a proton gradient. This is NADH-quinone oxidoreductase subunit I from Alkalilimnicola ehrlichii (strain ATCC BAA-1101 / DSM 17681 / MLHE-1).